The chain runs to 868 residues: MDSKEIRASFLNFFKSKGCTVVASSSLIPQADPTLLFTSAGMVQFKANFLGLDKSLHRAVTCQKCVRTTDIDSVGFTNRHLTFFEMLGNFSFGDYFKEQAINWAWEYLTQTLQIPAEKLYVSIYKGGIAERDNEAYNFWLKHLPKEKIFELGEKDNFWTMGPTGPCGPCSEIYYDFGDKGCKNKNCNIECDCGRFVEIWNIVFTQFDRKDDGSIVPLSQKNIDTGMGLERLVMAMQNVQSPFETDLFTPTINEAKKLLKIEGKIKEEISTLRIVSDHIRSSVFLISEGILPSNEGRGYILRRLIRRALRYGKLAGVKGPFLHLLVSVIDLHFGEIYPEIRNNKNYISSVIKTEEEAFFKTLENGEERLEDIIKKSKKTISGENAFYLYETFGFPVELTKEIALAKGLALDEESFEKAKKEAREKSRSYADEFSKEKLVVLQKIENSLKNTFVGYEQIQTKSKVLIVLNDKFEQVKELSGPGYAVLDKTPFYATGGGQMGDRGAFSWKDGQALVSTAEKPLSNIILHAVEVSGVLKEGSEIEVKIDPVNRKKTAANHTAVHLINEALRQVIGESVHQAGSFVSADVFRFDYTAPHAPTSEQLARVFEMANNAVIRAHPVNCEIRPLEDAKKLGAVTLVGEQYADPARFVMVGANFNEPSLKYSLELCGGTHVNNTSEIITVILIKEGALSAGVRRIEGVAGIAAIDYLKENTHALSAMAKTLETSLKEVPARVNSVLEDLKAAKKEIASLRQKLLTGGSGGTQVKEDVLNGKKIISMKAEGANPKELRTLADSLSQKHKDAVIVIAVDNGDRRSFVVKKAEGSNTDACTLAKGLAGKMEGSAGGKADFAQGGCKVTDWNEFLKTIKELL.

The Zn(2+) site is built by His-556, His-560, Cys-666, and His-670.

The protein belongs to the class-II aminoacyl-tRNA synthetase family. It depends on Zn(2+) as a cofactor.

Its subcellular location is the cytoplasm. It catalyses the reaction tRNA(Ala) + L-alanine + ATP = L-alanyl-tRNA(Ala) + AMP + diphosphate. Functionally, catalyzes the attachment of alanine to tRNA(Ala) in a two-step reaction: alanine is first activated by ATP to form Ala-AMP and then transferred to the acceptor end of tRNA(Ala). Also edits incorrectly charged Ser-tRNA(Ala) and Gly-tRNA(Ala) via its editing domain. This Elusimicrobium minutum (strain Pei191) protein is Alanine--tRNA ligase.